The following is a 313-amino-acid chain: MEKRKIILDCDSGHDDAIAIMMAAKHPAIDLLGITIVAGNQTLDKTLINGLNVCQKLEINVPVYAGMPQPIMRQQIVADNIHGETGLDGPVFEPLTRQAESTHAVKYIIDTLMASDGDITLVPVGPLSNIAVAMRMQPAILPKIREIVLMGGAYGTGNFTPSAEFNIFADPEAARVVFTSGVPLVMMGLDLTNQTVCTPDVIARMERAGGPAGELFSDIMNFTLKTQFENYGLAGGPVHDATCIGYLINPDGIKTQEMYVEVDVNSGPCYGRTVCDELGVLGKPANTKVGITIDTDWFWGLVEECVRGYIKTH.

D11 serves as the catalytic Proton acceptor. The Ca(2+) site is built by D11, D16, and V124. Positions 227 and 239 each coordinate substrate. D240 is a binding site for Ca(2+).

Belongs to the IUNH family. RihB subfamily. As to quaternary structure, homotetramer. Ca(2+) is required as a cofactor.

The catalysed reaction is a pyrimidine ribonucleoside + H2O = a pyrimidine nucleobase + D-ribose. Hydrolyzes cytidine or uridine to ribose and cytosine or uracil, respectively. Has a clear preference for cytidine over uridine. Strictly specific for ribonucleosides. This chain is Pyrimidine-specific ribonucleoside hydrolase RihB, found in Escherichia coli (strain SE11).